A 166-amino-acid chain; its full sequence is Large ribosomal subunit protein uL11z (166 aa).

Belongs to the universal ribosomal protein uL11 family.

In terms of biological role, binds directly to 26S ribosomal RNA. The sequence is that of Large ribosomal subunit protein uL11z (RPL12A) from Arabidopsis thaliana (Mouse-ear cress).